Consider the following 373-residue polypeptide: 3 beta-hydroxysteroid dehydrogenase/Delta 5--&gt;4-isomerase type 2 (373 aa).

Tyr155 acts as the Proton acceptor in catalysis. NAD(+) is bound at residue Lys159. A helical membrane pass occupies residues Val288 to Ile308.

Belongs to the 3-beta-HSD family. In terms of tissue distribution, liver and kidney.

The protein localises to the endoplasmic reticulum membrane. Its subcellular location is the mitochondrion membrane. The catalysed reaction is a 3beta-hydroxy-Delta(5)-steroid + NAD(+) = a 3-oxo-Delta(5)-steroid + NADH + H(+). It carries out the reaction a 3-oxo-Delta(5)-steroid = a 3-oxo-Delta(4)-steroid. It catalyses the reaction pregnenolone + NAD(+) = pregn-5-ene-3,20-dione + NADH + H(+). The enzyme catalyses pregn-5-ene-3,20-dione = progesterone. The catalysed reaction is 3beta-hydroxyandrost-5-en-17-one + NAD(+) = androst-5-ene-3,17-dione + NADH + H(+). It carries out the reaction androst-5-ene-3,17-dione = androst-4-ene-3,17-dione. It participates in lipid metabolism; steroid biosynthesis. In terms of biological role, 3-beta-HSD is a bifunctional enzyme, that catalyzes the oxidative conversion of Delta(5)-ene-3-beta-hydroxy steroid, and the oxidative conversion of ketosteroids. The 3-beta-HSD enzymatic system plays a crucial role in the biosynthesis of all classes of hormonal steroids. In Mus musculus (Mouse), this protein is 3 beta-hydroxysteroid dehydrogenase/Delta 5--&gt;4-isomerase type 2.